The following is a 355-amino-acid chain: Glucose-6-phosphatase 2 (355 aa).

Topologically, residues 1-24 (MDFLHRNGVLIIQHLQKDYRAYYT) are lumenal. A helical membrane pass occupies residues 25–45 (FLNFMSNVGDPRNIFFIYFPL). Over 46–56 (CFQFNQTVGTK) the chain is Cytoplasmic. The chain crosses the membrane as a helical span at residues 57-77 (MIWVAVIGDWLNLIFKWILFG). Residues 78–115 (HRPYWWVQETQIYPNHSSPCLEQFPTTCETGPGSPSGH) are Lumenal-facing. Substrate is bound at residue R79. N92 carries an N-linked (GlcNAc...) asparagine glycan. H115 serves as the catalytic Proton donor. The helical transmembrane segment at 116 to 136 (AMGASCVWYVMVTAALSHTVC) threads the bilayer. The Cytoplasmic portion of the chain corresponds to 137–146 (GMDKFSITLH). The helical transmembrane segment at 147–167 (RLTWSFLWSVFWLIQISVCIS) threads the bilayer. A topological domain (lumenal) is located at residue R168. R168 is a substrate binding site. A helical membrane pass occupies residues 169-189 (VFIATHFPHQVILGVIGGMLV). The Nucleophile role is filled by H174. At 190 to 211 (AEAFEHTPGIQTASLGTYLKTN) the chain is on the cytoplasmic side. A helical membrane pass occupies residues 212-232 (LFLFLFAVGFYLLLRVLNIDL). Residues 233-261 (LWSVPIAKKWCANPDWIHIDTTPFAGLVR) lie on the Lumenal side of the membrane. A helical membrane pass occupies residues 262–282 (NLGVLFGLGFAINSEMFLLSC). Residues 283 to 293 (RGGNNYTLSFR) lie on the Cytoplasmic side of the membrane. A helical transmembrane segment spans residues 294–314 (LLCALTSLTILQLYHFLQIPT). Residues 315-318 (HEEH) lie on the Lumenal side of the membrane. Residues 319-339 (LFYVLSFCKSASIPLTVVAFI) form a helical membrane-spanning segment. The Cytoplasmic segment spans residues 340 to 355 (PYSVHMLMKQSGKKSQ). The Prevents secretion from ER signature appears at 352–355 (KKSQ).

This sequence belongs to the glucose-6-phosphatase family. Post-translationally, N-glycosylated; the non-glycosylated form is more unstable and is degraded through the proteasome. As to expression, specifically expressed in pancreas and also detected to a lower extent in testis. Expressed by most islet cells in the pancreas (at protein level).

The protein localises to the endoplasmic reticulum membrane. It catalyses the reaction D-glucose 6-phosphate + H2O = D-glucose + phosphate. The protein operates within carbohydrate biosynthesis; gluconeogenesis. In terms of biological role, may hydrolyze glucose-6-phosphate to glucose in the endoplasmic reticulum. May be responsible for glucose production through glycogenolysis and gluconeogenesis. This chain is Glucose-6-phosphatase 2 (G6PC2), found in Homo sapiens (Human).